The primary structure comprises 184 residues: Shikimate kinase (184 aa).

ATP is bound at residue 17-22; sequence GAGKTT. Thr-21 is a binding site for Mg(2+). 3 residues coordinate substrate: Asp-39, Arg-63, and Gly-85. Arg-123 provides a ligand contact to ATP. Residue Arg-142 participates in substrate binding.

Belongs to the shikimate kinase family. Monomer. Mg(2+) serves as cofactor.

It localises to the cytoplasm. The catalysed reaction is shikimate + ATP = 3-phosphoshikimate + ADP + H(+). Its pathway is metabolic intermediate biosynthesis; chorismate biosynthesis; chorismate from D-erythrose 4-phosphate and phosphoenolpyruvate: step 5/7. In terms of biological role, catalyzes the specific phosphorylation of the 3-hydroxyl group of shikimic acid using ATP as a cosubstrate. The sequence is that of Shikimate kinase from Burkholderia pseudomallei (strain 1710b).